Consider the following 229-residue polypeptide: Molybdenum transport system permease protein ModB (229 aa).

Residues 1–16 are Periplasmic-facing; it reads MILTDPEWQAVLLSLK. Positions 11-219 constitute an ABC transmembrane type-1 domain; sequence VLLSLKVSSL…MISLLISEWL (209 aa). Residues 17–37 traverse the membrane as a helical segment; it reads VSSLAVLFSLPFGIFFAWLLV. Residues 38–49 are Cytoplasmic-facing; it reads RCTFPGKALLDS. A helical membrane pass occupies residues 50–70; sequence VLHLPLVLPPVVVGYLLLVSM. The Periplasmic portion of the chain corresponds to 71-83; it reads GRRGFIGERLYDW. A helical transmembrane segment spans residues 84–104; it reads FGITFAFSWRGAVLAAAVMSF. Residues 105-136 are Cytoplasmic-facing; it reads PLMVRAIRLALEGVDVKLEQAARTLGAGRWRV. A helical membrane pass occupies residues 137–157; the sequence is FFTITLPLTLPGIIVGTVLAF. Over 158-201 the chain is Periplasmic; it reads ARSLGEFGATITFVSNIPGETRTIPSAMYTLIQTPGGESGAARL. The chain crosses the membrane as a helical span at residues 202-222; it reads CIISIALAMISLLISEWLARI. Residues 223-229 lie on the Cytoplasmic side of the membrane; that stretch reads SRERAGR.

It belongs to the binding-protein-dependent transport system permease family. CysTW subfamily.

The protein resides in the cell inner membrane. Functionally, part of the binding-protein-dependent transport system for molybdenum; probably responsible for the translocation of the substrate across the membrane. This chain is Molybdenum transport system permease protein ModB (modB), found in Escherichia coli O157:H7.